The primary structure comprises 60 residues: MDLFEMLEDNHSTNNQNDSSDYKKEYRIVLQNYGIEAPDALLEELASYHLDPPPWAPWAK.

This is an uncharacterized protein from Escherichia coli (Bacteriophage T4).